A 209-amino-acid chain; its full sequence is ATP-dependent Clp protease proteolytic subunit (209 aa).

The active-site Nucleophile is the serine 106. Histidine 131 is an active-site residue.

This sequence belongs to the peptidase S14 family. Fourteen ClpP subunits assemble into 2 heptameric rings which stack back to back to give a disk-like structure with a central cavity, resembling the structure of eukaryotic proteasomes.

The protein localises to the cytoplasm. It carries out the reaction Hydrolysis of proteins to small peptides in the presence of ATP and magnesium. alpha-casein is the usual test substrate. In the absence of ATP, only oligopeptides shorter than five residues are hydrolyzed (such as succinyl-Leu-Tyr-|-NHMec, and Leu-Tyr-Leu-|-Tyr-Trp, in which cleavage of the -Tyr-|-Leu- and -Tyr-|-Trp bonds also occurs).. Cleaves peptides in various proteins in a process that requires ATP hydrolysis. Has a chymotrypsin-like activity. Plays a major role in the degradation of misfolded proteins. The polypeptide is ATP-dependent Clp protease proteolytic subunit (Brucella canis (strain ATCC 23365 / NCTC 10854 / RM-666)).